Reading from the N-terminus, the 1195-residue chain is MVYIKQIELSHFKSFGGTTSLPLLPEFTVVTGPNGSGKSNILDALLFALGLSSSKGMRADRLPDLVNSTYASRSRSTVETLVTVTFALDDWQPEAEETEEGEGTGLQPGMAEWTVSRKLRVTPSGTYTSTYAMNGEACTLQQLHEQLSRLRIYPEGYNVVLQGDVTNIISMSPRDRRQIIDELAGVAQFDRKIEQAKGKLEAVKEREDRCRIVEQELIEQRDRLAKDREKAQKYQALRQEQATKQSWEAVLRWRAGQRQVQALQRSLAQLATDAATDQQTQQTLEQQIQQTEATLDRLNQRVKALGEEELLKLQAALAQQEAEQRQSQRQQQELVESQTQTQQQIQALLQTQAQLQTEGQQQAEQARTLQTTIAQTLQPQYQQALEQVEAARQSAHALAAQSQDWVTRQTSLRQQADAIAAQVEPQRAEQAQLQERQTQLQQQLEATQSALVTVTAELETETEQAEGDRAALSQAEAAVVTAADQLVRLEEELQIQQETRDRLLKEQRDKQRQLDRQESLRQAMQETQGTAAARLILDTGLPGVHGLVAQLGRVEPRYQLALEVAAGGRLGYLVVDDDGVASAGIELLKQKKAGRITFLPLNRIRAGKQPEIPRWQQPEGLVDLAIALVDCDDRYREVFKFVLGGTVVFERLDQARRYMGQYRIVTLDGELLETSGAMTGGSIARRSGGLSFGSPDSGESAEVRAIRDRLEQLEVILDRSELQILNLQAAIKDAASTLSDRRQQQREQQLTVQQRQQTLQRLQQQQQQLNAELQQRQQQASQAQARLAALALELPAALKQLKTLRQALAELEDSPIHGEWQQRQTLLQQQEALLQQQETALRQAEQQLQQLQTDQKRLQERAIAARTQVSQLRQQQGEQLNRLAQLDEQQRQQATAIAQLQQRQAQLEAQLGQEKVDRDRTERQLQEQRSQRQNLVWQQEKRQQQQQELQQQLTDLEVQLQAEQQELPQPLPDIPEMVQQQGIEALQHELRSLAKRIQAMEPVNMLALEEYERTQARLEELSEKLTTIEAERTELLLRIENFTTLRRRAFMESFEAIDRNFQEIFAHLSDGDGSLQLDNPEDPFSSGLNLIAHPKGKPVRRLASMSGGEKSLTALSFIFALQRYRPSPFYALDEVDSFLDGANVERLARVIRQQAQAAQFIVVSHRRPMIEAAERTIGVTQARGAHTQVLGIPQP.

Residue 33–40 (PNGSGKSN) coordinates ATP. 3 coiled-coil regions span residues 185-241 (GVAQ…RQEQ), 273-348 (DAAT…IQAL), and 380-528 (QYQQ…QETQ). Residues 542–658 (PGVHGLVAQL…FERLDQARRY (117 aa)) enclose the SMC hinge domain. A coiled-coil region spans residues 698-1043 (GESAEVRAIR…ELLLRIENFT (346 aa)).

Belongs to the SMC family. Homodimer.

The protein resides in the cytoplasm. Its function is as follows. Required for chromosome condensation and partitioning. The polypeptide is Chromosome partition protein Smc (Synechococcus sp. (strain ATCC 27144 / PCC 6301 / SAUG 1402/1) (Anacystis nidulans)).